The primary structure comprises 146 residues: Snaclec stejaggregin-B subunit beta-1 (146 aa).

Positions 1 to 23 (MGRFIFVSFGLLVVFLSLSGTGA) are cleaved as a signal peptide. 3 disulfide bridges follow: cysteine 25-cysteine 36, cysteine 53-cysteine 142, and cysteine 119-cysteine 134. Residues 32–143 (YDLYCYRVFQ…CSQTYPFVCK (112 aa)) enclose the C-type lectin domain.

This sequence belongs to the snaclec family. As to quaternary structure, heteromultimer; disulfide-linked. In terms of tissue distribution, expressed by the venom gland.

It localises to the secreted. Interferes with one step of hemostasis (modulation of platelet aggregation, or coagulation cascade, for example). The protein is Snaclec stejaggregin-B subunit beta-1 of Trimeresurus stejnegeri (Chinese green tree viper).